The primary structure comprises 186 residues: Putative thiamine-phosphate synthase 2 (186 aa).

Residues 35 to 39 and asparagine 67 each bind 4-amino-2-methyl-5-(diphosphooxymethyl)pyrimidine; that span reads QLREK. Residue glutamate 68 participates in Mg(2+) binding. Position 105 (serine 105) interacts with 4-amino-2-methyl-5-(diphosphooxymethyl)pyrimidine. 2-[(2R,5Z)-2-carboxy-4-methylthiazol-5(2H)-ylidene]ethyl phosphate is bound at residue 131–133; it reads TSS. Histidine 134 provides a ligand contact to 4-amino-2-methyl-5-(diphosphooxymethyl)pyrimidine. Residues glycine 161 and 181-182 contribute to the 2-[(2R,5Z)-2-carboxy-4-methylthiazol-5(2H)-ylidene]ethyl phosphate site; that span reads IS.

It belongs to the thiamine-phosphate synthase family. Mg(2+) serves as cofactor.

It catalyses the reaction 2-[(2R,5Z)-2-carboxy-4-methylthiazol-5(2H)-ylidene]ethyl phosphate + 4-amino-2-methyl-5-(diphosphooxymethyl)pyrimidine + 2 H(+) = thiamine phosphate + CO2 + diphosphate. The catalysed reaction is 2-(2-carboxy-4-methylthiazol-5-yl)ethyl phosphate + 4-amino-2-methyl-5-(diphosphooxymethyl)pyrimidine + 2 H(+) = thiamine phosphate + CO2 + diphosphate. It carries out the reaction 4-methyl-5-(2-phosphooxyethyl)-thiazole + 4-amino-2-methyl-5-(diphosphooxymethyl)pyrimidine + H(+) = thiamine phosphate + diphosphate. It functions in the pathway cofactor biosynthesis; thiamine diphosphate biosynthesis; thiamine phosphate from 4-amino-2-methyl-5-diphosphomethylpyrimidine and 4-methyl-5-(2-phosphoethyl)-thiazole: step 1/1. Its function is as follows. Condenses 4-methyl-5-(beta-hydroxyethyl)thiazole monophosphate (THZ-P) and 2-methyl-4-amino-5-hydroxymethyl pyrimidine pyrophosphate (HMP-PP) to form thiamine monophosphate (TMP). In Aquifex aeolicus (strain VF5), this protein is Putative thiamine-phosphate synthase 2 (thiE2).